The following is a 319-amino-acid chain: Ribonucleoside-diphosphate reductase small chain (319 aa).

Residues D70, E101, and H104 each coordinate Fe cation. Residue Y108 is part of the active site. Residues E163, E197, and H200 each coordinate Fe cation. An interaction with R1 region spans residues 313-319 (FSLDVDF).

The protein belongs to the ribonucleoside diphosphate reductase small chain family. Interacts with RNR1/OPG080 subunit. Can interact with host RNR1 supunit. It depends on Fe cation as a cofactor.

The catalysed reaction is a 2'-deoxyribonucleoside 5'-diphosphate + [thioredoxin]-disulfide + H2O = a ribonucleoside 5'-diphosphate + [thioredoxin]-dithiol. In terms of biological role, ribonucleoside-diphosphate reductase holoenzyme provides the precursors necessary for viral DNA synthesis. Allows virus growth in non-dividing cells. Catalyzes the biosynthesis of deoxyribonucleotides from the corresponding ribonucleotides. The protein is Ribonucleoside-diphosphate reductase small chain (OPG048) of Variola virus.